A 399-amino-acid polypeptide reads, in one-letter code: Serine palmitoyltransferase (399 aa).

Pyridoxal 5'-phosphate contacts are provided by residues 113-114 (GF), histidine 213, threonine 241, and serine 243. Lysine 244 is modified (N6-(pyridoxal phosphate)lysine).

Belongs to the class-II pyridoxal-phosphate-dependent aminotransferase family. In terms of assembly, homodimer. It depends on pyridoxal 5'-phosphate as a cofactor.

The protein resides in the cytoplasm. The protein localises to the cell inner membrane. The enzyme catalyses L-serine + hexadecanoyl-CoA + H(+) = 3-oxosphinganine + CO2 + CoA. The protein operates within lipid metabolism; sphingolipid metabolism. In terms of biological role, catalyzes the condensation of L-serine with palmitoyl-CoA (hexadecanoyl-CoA) to produce 3-oxosphinganine. Exhibits a broad substrate specificity concerning the chain length and the degree of unsaturation of acyl-CoA. The protein is Serine palmitoyltransferase of Sphingobacterium multivorum.